Consider the following 534-residue polypeptide: Chaperonin GroEL 3 (534 aa).

ATP-binding positions include 31-34 (TLGP), Gly-416, 479-481 (NAL), and Asp-495.

Belongs to the chaperonin (HSP60) family. As to quaternary structure, forms a cylinder of 14 subunits composed of two heptameric rings stacked back-to-back. Interacts with the co-chaperonin GroES.

The protein localises to the cytoplasm. It carries out the reaction ATP + H2O + a folded polypeptide = ADP + phosphate + an unfolded polypeptide.. Together with its co-chaperonin GroES, plays an essential role in assisting protein folding. The GroEL-GroES system forms a nano-cage that allows encapsulation of the non-native substrate proteins and provides a physical environment optimized to promote and accelerate protein folding. The polypeptide is Chaperonin GroEL 3 (Protochlamydia amoebophila (strain UWE25)).